Consider the following 446-residue polypeptide: MLLLPSRGKLYVVGIGPGKEELMTLKAKRAIEEADYIVGYQTYVDRISHLIEGKKVVTTPMRKELDRVKIALELAKEHVVALISGGDPSIYGILPLVIEYAVEKKVDVEIEAIPGVTAASAASSLLGSAISGDFAVVSLSDLLVPWSVVEKRLLYALSGDFVVAIYNPSSRRRKENFRKAMEIVRRFRGDAWVGVVRNAGREGQQVEIRRVSEVDEVDMNTILIVGNSETKVVDGKMFTPRGYSNKYNIGEKRRAERMGASTKGGMEVARRSEEILRSFYPEEGLRGDIIRRCIATTGDVTIKDVIRFVGDTEEGVRALRDGCRIIADVHMVRAGLRRDAIVAVDFARGDDTRTASGIRNLAEMIEGSLVAIGNSPSAAFALCEVAEKHPPRFIVATPVGFVNAAESKEMVRKLPVPSVTTEGPRGGSGICAAIVNCLIEHADRPD.

A cobalt-factor III C(17)-methyltransferase region spans residues 1-246 (MLLLPSRGKL…MFTPRGYSNK (246 aa)). The tract at residues 247–446 (YNIGEKRRAE…CLIEHADRPD (200 aa)) is cobalt-precorrin-8 methylmutase.

In the N-terminal section; belongs to the precorrin methyltransferase family. This sequence in the C-terminal section; belongs to the CobH family.

The enzyme catalyses Co(II)-factor III + S-adenosyl-L-methionine + H(+) = Co(II)-factor IV + S-adenosyl-L-homocysteine. The catalysed reaction is Co-precorrin-8X = cob(II)yrinate. It functions in the pathway cofactor biosynthesis; adenosylcobalamin biosynthesis; cob(II)yrinate a,c-diamide from sirohydrochlorin (anaerobic route): step 3/10. The protein operates within cofactor biosynthesis; adenosylcobalamin biosynthesis; cob(II)yrinate a,c-diamide from sirohydrochlorin (anaerobic route): step 9/10. In terms of biological role, bifunctional enzyme with a methyltransferase domain that catalyzes the ring contraction and methylation of C-17 in cobalt-factor III to form cobalt-factor IV, and an isomerase domain that catalyzes the conversion of cobalt-precorrin-8 to cobyrinate. The polypeptide is Cobalamin biosynthesis protein CbiHC (cbiHC) (Archaeoglobus fulgidus (strain ATCC 49558 / DSM 4304 / JCM 9628 / NBRC 100126 / VC-16)).